Reading from the N-terminus, the 524-residue chain is Zinc finger CCCH-type with G patch domain-containing protein (524 aa).

Positions 105 to 142 (SEESQPLGSNDETSTCSKGSEEEEEEEEEEEDNTSGMK) are disordered. A compositionally biased stretch (polar residues) spans 106 to 122 (EESQPLGSNDETSTCSK). Residues 125–137 (EEEEEEEEEEEDN) show a composition bias toward acidic residues. Residues 184–210 (KAMKPCPFFLDGKCLFNDNCRFSHGQV) form a C3H1-type zinc finger. The interval 279–298 (RGSDSSSSSSSDEEEDGAAE) is disordered. In terms of domain architecture, G-patch spans 326-372 (TRGIGSKLLVRMGYEFGKGLGRNAEGRVEPIQAVVLPKGKSLDQCME). 2 disordered regions span residues 375 to 402 (QRKK…GGAK) and 500 to 524 (GLQQ…MTEF). Basic residues predominate over residues 376-393 (RKKAGGKHKHKTSKRRPK).

The protein localises to the nucleus. Its function is as follows. Transcription repressor that specifically binds the 5'-GGAG[GA]A[GA]A-3' consensus sequence. Represses transcription by recruiting the chromatin multiprotein complex NuRD to target promoters. Negatively regulates expression of EGFR, a gene involved in cell proliferation, survival and migration. The protein is Zinc finger CCCH-type with G patch domain-containing protein (zgpat) of Xenopus laevis (African clawed frog).